The primary structure comprises 200 residues: Holliday junction resolvase RecU (200 aa).

Residues Thr-82, Asp-84, Glu-97, and Gln-116 each contribute to the Mg(2+) site.

Belongs to the RecU family. Mg(2+) serves as cofactor.

It localises to the cytoplasm. It carries out the reaction Endonucleolytic cleavage at a junction such as a reciprocal single-stranded crossover between two homologous DNA duplexes (Holliday junction).. Endonuclease that resolves Holliday junction intermediates in genetic recombination. Cleaves mobile four-strand junctions by introducing symmetrical nicks in paired strands. Promotes annealing of linear ssDNA with homologous dsDNA. Required for DNA repair, homologous recombination and chromosome segregation. The chain is Holliday junction resolvase RecU from Streptococcus sanguinis (strain SK36).